A 164-amino-acid polypeptide reads, in one-letter code: Kunitz-type proteinase inhibitor BbCI (164 aa).

The protein belongs to the protease inhibitor I3 (leguminous Kunitz-type inhibitor) family.

It localises to the secreted. In terms of biological role, inhibits T.cruzi cruzipain. The sequence is that of Kunitz-type proteinase inhibitor BbCI from Bauhinia bauhinioides (Perlebia bauhinoides).